Reading from the N-terminus, the 510-residue chain is Cytochrome c-552 (510 aa).

An N-terminal signal peptide occupies residues Met1–Ala50. His124 provides a ligand contact to heme c. The heme site is built by Cys152, Cys155, and Lys156. 6 residues coordinate heme c: Cys190, Cys193, His194, Cys239, Cys242, and His243. Glu245, Tyr246, Lys291, and Gln293 together coordinate Ca(2+). A substrate-binding site is contributed by Tyr246. His294 is a binding site for substrate. Heme c contacts are provided by His305, Cys312, Cys315, His316, His331, Cys344, Cys347, His348, and His423.

Belongs to the cytochrome c-552 family. It depends on Ca(2+) as a cofactor. Heme c is required as a cofactor.

The protein resides in the periplasm. The enzyme catalyses 6 Fe(III)-[cytochrome c] + NH4(+) + 2 H2O = 6 Fe(II)-[cytochrome c] + nitrite + 8 H(+). It participates in nitrogen metabolism; nitrate reduction (assimilation). In terms of biological role, catalyzes the reduction of nitrite to ammonia, consuming six electrons in the process. This Pasteurella multocida (strain Pm70) protein is Cytochrome c-552.